The chain runs to 151 residues: Mitochondrial intermembrane space import and assembly protein 40 homolog (151 aa).

The segment at 1 to 35 is disordered; it reads MGQGLSQPAQAVEEPSPPAVEAAPSSSPSPAPAPS. Positions 7-26 are enriched in low complexity; it reads QPAQAVEEPSPPAVEAAPSS. 3 disulfides stabilise this stretch: C65–C67, C76–C109, and C86–C99. In terms of domain architecture, CHCH spans 73–117; that stretch reads NGPCGSQFVDAFSCFLKSTEEEKGSDCVKPFIALQDCIKINPEAF. Short sequence motifs (cx9C motif) lie at residues 76-86 and 99-109; these read CGSQFVDAFSC and CVKPFIALQDC. The tract at residues 123-151 is disordered; that stretch reads EEEENDEEAEKSNLKVRAPAWSRESKPKL.

The protein resides in the mitochondrion intermembrane space. The protein localises to the peroxisome matrix. Functionally, required for the import and folding of small cysteine-containing proteins in the mitochondrial intermembrane space. This chain is Mitochondrial intermembrane space import and assembly protein 40 homolog, found in Oryza sativa subsp. japonica (Rice).